The following is a 1338-amino-acid chain: Protein dispatched homolog 3 (1338 aa).

Over 1–67 the chain is Cytoplasmic; sequence MDTEDDPLLQ…VGWIFTNPYC (67 aa). A helical membrane pass occupies residues 68-88; that stretch reads AGFILFLGCAIPAVLAVVMFL. The Lumenal segment spans residues 89-406; the sequence is HYPALDIDIS…YEVRRTFNND (318 aa). The disordered stretch occupies residues 164–196; it reads TRAKRSAPQGRTSSPEPRAHPHPGNETSRVTRG. Positions 401–559 constitute an SSD domain; sequence RTFNNDMLLA…LFTMPAALGI (159 aa). The helical transmembrane segment at 407–427 threads the bilayer; it reads MLLAFISSSCIAVLVYILTSC. Ser-428 is a topological domain (cytoplasmic). A helical transmembrane segment spans residues 429-449; it reads VFLSFFGIASIGLSCLVALFL. Residues 450-452 are Lumenal-facing; that stretch reads YHV. The chain crosses the membrane as a helical span at residues 453 to 473; it reads VFGIQYLGILNGVAAFVIVGI. The Cytoplasmic segment spans residues 474–517; that stretch reads GVDDVFVFINTYRQATHLKDLRLRMIHTIQTAGKATFFTSLTTA. Residues 518-538 form a helical membrane-spanning segment; that stretch reads AAYAANIFSQIPAVHDFGLFM. Ser-539 is a topological domain (lumenal). Residues 540–560 form a helical membrane-spanning segment; sequence LIVSCCWVAVLFTMPAALGIW. Over 561 to 672 the chain is Cytoplasmic; the sequence is TLYVSPLESS…WVLWSAVKSR (112 aa). A helical transmembrane segment spans residues 673-693; sequence WVIVGLFLLVLLLSIFFASRL. Over 694–1128 the chain is Lumenal; it reads RPASRAPVLF…IFMEIIGVQS (435 aa). Residues 747–768 are disordered; that stretch reads SLEKKKRGSASPWGSKGSISDT. Residues 1129 to 1149 traverse the membrane as a helical segment; it reads ALYGLILSLVICVAAVAVFTT. A topological domain (cytoplasmic) is located at residue His-1150. The helical transmembrane segment at 1151 to 1171 threads the bilayer; that stretch reads ILLLLPVLLSILGVVCLVVTI. At 1172 to 1237 the chain is on the lumenal side; sequence MYWSGWEMGA…TIEAIRHVGV (66 aa). The helical transmembrane segment at 1238–1258 threads the bilayer; that stretch reads AIVSSAVTTVIATVPLFFCII. Residues 1259-1266 are Cytoplasmic-facing; that stretch reads APFAKFGK. A helical membrane pass occupies residues 1267–1287; sequence IVALNTGVSILYTLTVSTALL. Residues 1288 to 1302 are Lumenal-facing; the sequence is SIMGPGTFTRSRTSC. The chain crosses the membrane as a helical span at residues 1303–1323; sequence LKAVAGVLLAGLLGLCICLAL. The Cytoplasmic portion of the chain corresponds to 1324–1338; sequence LKGGFKIPLPNGTAL.

Belongs to the patched family. In terms of tissue distribution, expressed in retina, hippocampus and cerebellum. Expressed in the ganglion and bipolar cells of the inner and outer nuclear layers of the retina and in Purkinje cells (at protein level). Expressed strongly in brain and retina, weakly in testis and bone marrow.

It is found in the endoplasmic reticulum membrane. The protein localises to the nucleus membrane. It localises to the cytoplasmic vesicle membrane. In terms of biological role, plays a role in neuronal proliferation and differentiation. Plays a role in the accumulation of cellular cholesterol. Involved in intracellular lipid droplet formation. May contribute to cholesterol homeostasis in neuronal cells. This Gallus gallus (Chicken) protein is Protein dispatched homolog 3.